Reading from the N-terminus, the 381-residue chain is Beta-lactamase (381 aa).

The signal sequence occupies residues M1 to A20. The active-site Acyl-ester intermediate is S84. Catalysis depends on Y170, which acts as the Proton acceptor. K335–G337 lines the substrate pocket.

This sequence belongs to the class-C beta-lactamase family.

The protein localises to the periplasm. It catalyses the reaction a beta-lactam + H2O = a substituted beta-amino acid. Its function is as follows. This protein is a serine beta-lactamase with a substrate specificity for cephalosporins. This is Beta-lactamase (ampC) from Enterobacter cloacae.